Reading from the N-terminus, the 269-residue chain is Imidazole glycerol phosphate synthase subunit HisF (269 aa).

Residues Asp-23 and Asp-142 contribute to the active site.

It belongs to the HisA/HisF family. In terms of assembly, heterodimer of HisH and HisF.

It is found in the cytoplasm. The catalysed reaction is 5-[(5-phospho-1-deoxy-D-ribulos-1-ylimino)methylamino]-1-(5-phospho-beta-D-ribosyl)imidazole-4-carboxamide + L-glutamine = D-erythro-1-(imidazol-4-yl)glycerol 3-phosphate + 5-amino-1-(5-phospho-beta-D-ribosyl)imidazole-4-carboxamide + L-glutamate + H(+). Its pathway is amino-acid biosynthesis; L-histidine biosynthesis; L-histidine from 5-phospho-alpha-D-ribose 1-diphosphate: step 5/9. Its function is as follows. IGPS catalyzes the conversion of PRFAR and glutamine to IGP, AICAR and glutamate. The HisF subunit catalyzes the cyclization activity that produces IGP and AICAR from PRFAR using the ammonia provided by the HisH subunit. This chain is Imidazole glycerol phosphate synthase subunit HisF, found in Bordetella pertussis (strain Tohama I / ATCC BAA-589 / NCTC 13251).